Consider the following 60-residue polypeptide: Potassium channel toxin alpha-KTx 29.1 (60 aa).

Positions 1–28 (MKSVCGVLIILVVLTTMLSISTFSTVGA) are cleaved as a signal peptide. 3 cysteine pairs are disulfide-bonded: cysteine 32-cysteine 51, cysteine 40-cysteine 56, and cysteine 44-cysteine 58.

Belongs to the short scorpion toxin superfamily. Potassium channel inhibitor family. Alpha-KTx 29 subfamily. Expressed by the venom gland.

It localises to the secreted. In terms of biological role, weakly inhibits the Kv1.3/KCNA3 channel (1 uM of the toxin inhibits currents by 13.2%) and Kv7.1/KCNQ1 channel (10 uM of the toxin inhibits currents by 27.7%). The chain is Potassium channel toxin alpha-KTx 29.1 from Lychas mucronatus (Chinese swimming scorpion).